The primary structure comprises 927 residues: Isoleucine--tRNA ligase (927 aa).

The 'HIGH' region signature appears at 57-67 (PFANGNIHMGH). Glu-553 provides a ligand contact to L-isoleucyl-5'-AMP. The short motif at 594-598 (KMSKS) is the 'KMSKS' region element. Lys-597 is an ATP binding site. Residues Cys-886, Cys-889, Cys-906, and Cys-909 each coordinate Zn(2+).

Belongs to the class-I aminoacyl-tRNA synthetase family. IleS type 1 subfamily. As to quaternary structure, monomer. Zn(2+) is required as a cofactor.

It is found in the cytoplasm. It catalyses the reaction tRNA(Ile) + L-isoleucine + ATP = L-isoleucyl-tRNA(Ile) + AMP + diphosphate. In terms of biological role, catalyzes the attachment of isoleucine to tRNA(Ile). As IleRS can inadvertently accommodate and process structurally similar amino acids such as valine, to avoid such errors it has two additional distinct tRNA(Ile)-dependent editing activities. One activity is designated as 'pretransfer' editing and involves the hydrolysis of activated Val-AMP. The other activity is designated 'posttransfer' editing and involves deacylation of mischarged Val-tRNA(Ile). The chain is Isoleucine--tRNA ligase from Lactobacillus acidophilus (strain ATCC 700396 / NCK56 / N2 / NCFM).